We begin with the raw amino-acid sequence, 189 residues long: Large ribosomal subunit protein bL25 (189 aa).

It belongs to the bacterial ribosomal protein bL25 family. CTC subfamily. Part of the 50S ribosomal subunit; part of the 5S rRNA/L5/L18/L25 subcomplex. Contacts the 5S rRNA. Binds to the 5S rRNA independently of L5 and L18.

Functionally, this is one of the proteins that binds to the 5S RNA in the ribosome where it forms part of the central protuberance. The sequence is that of Large ribosomal subunit protein bL25 from Azobacteroides pseudotrichonymphae genomovar. CFP2.